Consider the following 1369-residue polypeptide: Phospholipase D1 (1369 aa).

Disordered regions lie at residues 27–90 (YSEK…SSWH) and 318–340 (ESHS…GRKK). Residues 31-53 (GTGRKDAEDHTPSKITDLEKNVD) are compositionally biased toward basic and acidic residues. Residues 208 to 379 (TDLIKVSVLD…NVLYSFLEFS (172 aa)) form the PX domain. PLD phosphodiesterase domains follow at residues 641–668 (LFWA…CFGR) and 941–968 (EMIY…NERS). Positions 1277-1289 (HETHEKSENDPKN) are enriched in basic and acidic residues. Residues 1277-1320 (HETHEKSENDPKNPKAGSQGSGNTSASEDSKTEKPKTRTNNGLQ) form a disordered region. A compositionally biased stretch (polar residues) spans 1292–1303 (AGSQGSGNTSAS).

This sequence belongs to the phospholipase D family.

Its subcellular location is the cytoplasm. The catalysed reaction is a 1,2-diacyl-sn-glycero-3-phosphocholine + H2O = a 1,2-diacyl-sn-glycero-3-phosphate + choline + H(+). Its activity is regulated as follows. Activity is slightly stimulated by oleate. In terms of biological role, required for meiosis and spore formation. Seems to be involved in the coordinate induction of late meiotic events. The polypeptide is Phospholipase D1 (pld1) (Schizosaccharomyces pombe (strain 972 / ATCC 24843) (Fission yeast)).